The following is a 224-amino-acid chain: MKLSLSPPPYADAPVVVLISGLGGSGSYWLPQLAVLEQEYQVVCYDQRGTGNNPDTLAEDYSIAQMAAELHQALVAAGIEHYAVVGHALGALVGMQLALDYPASVTVLVSVNGWLRINAHTRRCFQVRERLLYSGGAQAWVEAQPLFLYPADWMAARAPRLEAEDALALAHFQGKNNLLRRLNALKRADFSHHADRIRCPVQIICASDDLLVPSACSSELHAAL.

The AB hydrolase-1 domain maps to 14–115; the sequence is PVVVLISGLG…TVLVSVNGWL (102 aa).

It belongs to the AB hydrolase superfamily. Hydrolase RutD family.

It carries out the reaction carbamate + 2 H(+) = NH4(+) + CO2. Involved in pyrimidine catabolism. May facilitate the hydrolysis of carbamate, a reaction that can also occur spontaneously. This is Putative carbamate hydrolase RutD from Shigella dysenteriae serotype 1 (strain Sd197).